A 1198-amino-acid chain; its full sequence is Rac guanine nucleotide exchange factor B (1198 aa).

A disordered region spans residues 1–104 (MFSNFFGSSK…QHQGVITSLQ (104 aa)). Over residues 8-20 (SSKRNTIASSSSS) the composition is skewed to low complexity. A compositionally biased stretch (basic and acidic residues) spans 21-34 (SKKDKDNGKDESSK). A compositionally biased stretch (polar residues) spans 35-58 (LKNSGSSTLPKPITNNESGNNFIT). Positions 59-97 (SPSVSSPLISPLSSSPSPLLSSSSNSIQSTSHQQQQQHQ) are enriched in low complexity. Positions 126–232 (SSLEQTARKW…NIVVLGKHAS (107 aa)) constitute a Calponin-homology (CH) 1 domain. A disordered region spans residues 260 to 284 (FGGNHNNNNNNNNNNNTSNGDLSPV). Low complexity predominate over residues 263–275 (NHNNNNNNNNNNN). 2 Calponin-homology (CH) domains span residues 341-449 (PELQ…NKMY) and 511-619 (PEDM…ENFD). Residues 632–846 (RRQKVIEEII…KRVADHVNES (215 aa)) enclose the DH domain. Positions 876–1026 (TYIREGFLEI…WMEDLRSCLQ (151 aa)) constitute a PH domain. Over residues 940–952 (GEACVDGDDDGGE) the composition is skewed to acidic residues. 2 disordered regions span residues 940–989 (GEAC…SNKS) and 1076–1198 (NNNN…IDNQ). Low complexity-rich tracts occupy residues 977–989 (NSNNNNNSNSNKS) and 1076–1118 (NNNN…NNND). The segment covering 1155 to 1167 (DETISDTESDDYE) has biased composition (acidic residues). The span at 1188–1198 (FSDTIKNIDNQ) shows a compositional bias: polar residues.

Binds to F-actin.

It is found in the late endosome. Functionally, involved in the regulation of the late steps of the endocytic pathway. The sequence is that of Rac guanine nucleotide exchange factor B (gxcB) from Dictyostelium discoideum (Social amoeba).